Reading from the N-terminus, the 194-residue chain is uncharacterized protein (194 aa).

Disordered stretches follow at residues 1 to 21 (MPKGRRGSQNPKMSQRPAPPL) and 73 to 97 (PATVPPPPPGLGPPSERPCPPPWPS). Residues 73 to 96 (PATVPPPPPGLGPPSERPCPPPWP) are compositionally biased toward pro residues.

This is an uncharacterized protein from Mus musculus (Mouse).